A 26-amino-acid chain; its full sequence is GTP-binding protein Rheb (26 aa).

GTP contacts are provided by serine 1, serine 2, valine 13, tyrosine 16, and threonine 19. Serine 1 serves as a coordination point for Mg(2+). Positions 16-24 (YDPTIENTF) match the Effector region motif. Threonine 19 provides a ligand contact to Mg(2+).

Belongs to the small GTPase superfamily. Rheb family.

The catalysed reaction is GTP + H2O = GDP + phosphate + H(+). Binds GTP and exhibits intrinsic GTPase activity. The chain is GTP-binding protein Rheb from Crocodylus siamensis (Siamese crocodile).